A 136-amino-acid polypeptide reads, in one-letter code: Large ribosomal subunit protein eL27 (136 aa).

One can recognise a KOW domain in the interval 5-40; that stretch reads MKPGKVVLVLAGRYSGRKAVIVKNIDDGTSDRPYSH. Residues K27 and K93 each carry the N6-acetyllysine modification.

The protein belongs to the eukaryotic ribosomal protein eL27 family. Component of the large ribosomal subunit. Interacts with RRP1B. Component of the large ribosomal subunit. Interacts with RRP1B. Interacts with DHX33.

The protein resides in the cytoplasm. Its subcellular location is the cytosol. The protein localises to the rough endoplasmic reticulum. Its function is as follows. Component of the large ribosomal subunit. Required for proper rRNA processing and maturation of 28S and 5.8S rRNAs. This is Large ribosomal subunit protein eL27 (RPL27) from Bos taurus (Bovine).